Reading from the N-terminus, the 145-residue chain is Large ribosomal subunit protein uL14m (145 aa).

Residues 1-30 (MAFFTGLWGPFTCVSRVLSHHCFSTTGSLS) constitute a mitochondrion transit peptide.

Belongs to the universal ribosomal protein uL14 family. As to quaternary structure, component of the mitochondrial large ribosomal subunit (mt-LSU). Mature mammalian 55S mitochondrial ribosomes consist of a small (28S) and a large (39S) subunit. The 28S small subunit contains a 12S ribosomal RNA (12S mt-rRNA) and 30 different proteins. The 39S large subunit contains a 16S rRNA (16S mt-rRNA), a copy of mitochondrial valine transfer RNA (mt-tRNA(Val)), which plays an integral structural role, and 52 different proteins. Interacts with MALSU1.

The protein localises to the mitochondrion. Its function is as follows. Forms part of 2 intersubunit bridges in the assembled ribosome. Upon binding to MALSU1 intersubunit bridge formation is blocked, preventing ribosome formation and repressing translation. In Homo sapiens (Human), this protein is Large ribosomal subunit protein uL14m (MRPL14).